The following is a 78-amino-acid chain: Glycophorin-E (78 aa).

The first 19 residues, 1–19, serve as a signal peptide directing secretion; sequence MYGKIIFVLLLSGIVSISA. Over 20–52 the chain is Extracellular; it reads SSTTGVAMHTSTSSSVTKSYISSQTNGITLINW. A helical transmembrane segment spans residues 53-73; that stretch reads WAMARVIFEVMLVVVGMIILI. The Cytoplasmic segment spans residues 74-78; sequence SYCIR.

It belongs to the glycophorin-A family. In terms of processing, the N-terminal extracellular domain is heavily glycosylated on serine and threonine residues. As to expression, erythrocytes.

Its subcellular location is the membrane. Its function is as follows. This protein is a minor sialoglycoprotein in human erythrocyte membranes. This chain is Glycophorin-E (GYPE), found in Homo sapiens (Human).